Here is a 51-residue protein sequence, read N- to C-terminus: MADLIGLAIVFLIFALVAYVLGARGVAGLSMTIAKWLVIIFIVLAIITILL.

Helical transmembrane passes span 1–21 and 31–51; these read MADL…AYVL and MTIA…TILL.

Belongs to the UPF0391 family.

The protein resides in the cell membrane. The sequence is that of UPF0391 membrane protein Mbur_2216 from Methanococcoides burtonii (strain DSM 6242 / NBRC 107633 / OCM 468 / ACE-M).